The chain runs to 347 residues: MVTRAGAGTAVAGAVVVALLSAALALYGPPLDAVLERAFSLRKAHSIKDMENTLQLVRNIIPPLSSTKHKGQDGRIGVVGGCQEYTGAPYFAAISALKVGADLSHVFCASAAAPVIKAYSPELIVHPVLDSPNAVHEVEKWLPRLHALVVGPGLGRDDALLRNVQGILEVSKARDIPVVIDADGLWLVAQQPALIHGYRKAVLTPNHVEFSRLYDAVLRGPMDSDDSHGSVLRLSQALGNVTVVQKGERDILSNGQQVLVCSQEGSSRRCGGQGDLLSGSLGVLVHWALLAGPQKTNGSSPLLVAAFGACSLTRQCNHQAFQKHGRSTTTSDMIAEVGAAFSKLFET.

Residues threonine 53–leucine 344 form the YjeF C-terminal domain. A Phosphotyrosine modification is found at tyrosine 85. (6S)-NADPHX is bound by residues glycine 153 and asparagine 206–arginine 212. Residue asparagine 240 is glycosylated (N-linked (GlcNAc...) asparagine). ATP-binding positions include lysine 246 to aspartate 250 and glycine 265 to glycine 274. Aspartate 275 serves as a coordination point for (6S)-NADPHX. N-linked (GlcNAc...) asparagine glycosylation occurs at asparagine 297.

Belongs to the NnrD/CARKD family. The cofactor is Mg(2+).

It is found in the mitochondrion. It catalyses the reaction (6S)-NADHX + ATP = ADP + phosphate + NADH + H(+). The enzyme catalyses (6S)-NADPHX + ATP = ADP + phosphate + NADPH + H(+). Its function is as follows. Catalyzes the dehydration of the S-form of NAD(P)HX at the expense of ATP, which is converted to ADP. Together with NAD(P)HX epimerase, which catalyzes the epimerization of the S- and R-forms, the enzyme allows the repair of both epimers of NAD(P)HX, a damaged form of NAD(P)H that is a result of enzymatic or heat-dependent hydration. In Homo sapiens (Human), this protein is ATP-dependent (S)-NAD(P)H-hydrate dehydratase.